Reading from the N-terminus, the 137-residue chain is Large-conductance mechanosensitive channel (137 aa).

2 helical membrane-spanning segments follow: residues 16-36 (VIDL…VDSI) and 83-103 (GNFI…FLMI).

This sequence belongs to the MscL family. In terms of assembly, homopentamer.

The protein localises to the cell inner membrane. Functionally, channel that opens in response to stretch forces in the membrane lipid bilayer. May participate in the regulation of osmotic pressure changes within the cell. This is Large-conductance mechanosensitive channel from Methylibium petroleiphilum (strain ATCC BAA-1232 / LMG 22953 / PM1).